The sequence spans 168 residues: Photosystem I assembly protein Ycf3 (168 aa).

3 TPR repeats span residues 35–68 (AFTYYRDGMSAQSEGNYAEALQNYYEAMRLEIDP), 72–105 (SYILYNIGLIHTSNGEHTKALEYYFRALERNPFL), and 120–153 (GEQAIQQGDSEIAEAWFDQAAEYWKQAIALTPGN).

It belongs to the Ycf3 family.

It is found in the plastid. The protein localises to the chloroplast thylakoid membrane. Essential for the assembly of the photosystem I (PSI) complex. May act as a chaperone-like factor to guide the assembly of the PSI subunits. This is Photosystem I assembly protein Ycf3 from Solanum tuberosum (Potato).